The following is a 539-amino-acid chain: Chaperonin GroEL (539 aa).

ATP contacts are provided by residues 29–32 (TLGP), 86–90 (DGTTT), Gly-413, 479–481 (DAL), and Asp-495.

It belongs to the chaperonin (HSP60) family. In terms of assembly, forms a cylinder of 14 subunits composed of two heptameric rings stacked back-to-back. Interacts with the co-chaperonin GroES.

The protein resides in the cytoplasm. The catalysed reaction is ATP + H2O + a folded polypeptide = ADP + phosphate + an unfolded polypeptide.. Together with its co-chaperonin GroES, plays an essential role in assisting protein folding. The GroEL-GroES system forms a nano-cage that allows encapsulation of the non-native substrate proteins and provides a physical environment optimized to promote and accelerate protein folding. The sequence is that of Chaperonin GroEL from Thermosipho africanus (strain TCF52B).